Here is a 465-residue protein sequence, read N- to C-terminus: MPLNKKVLAIVLAGGEGNRLMPLTADRAKPGVPFAGSYRLIDFALSNLVNSRYLQIVVLTQYKSHSLDRHISETWRMSTQLGNYIASVPAQQRVGKSWFLGSANAIYQSLNLIHDANPDIVVVVGADHVYRMDFAQMVEQHVASGAKATVAAVRQPLNMADQFGVIEVDQENPQKIAAFVEKPSSTPGLAADPTQFLASMGNYVFDADALVDALHVDAERLDTKHDMGGDIIPYFVNKGEAGVYDFTLNDIPGSTERDRTYWRDVGTIDSFYDAHMDLISPMPVFNLYNSEWPIYTRQSISPPAKFVRGQGNTVGTALDSIVASGVVISGGIVEGSVLSNDVYVGTASRVVDSVLMDKVQIGEGAVVNRAIIDKNVKVPAGAAIGLDPERDRARGFKVTESGITVLSKGQAVPEPDEAERALSAANLHLVPNAIKAATENYPAARDSAAKVGEAHAAAVGVSSND.

Residues glycine 164, 181–182 (EK), and serine 199 each bind alpha-D-glucose 1-phosphate.

The protein belongs to the bacterial/plant glucose-1-phosphate adenylyltransferase family. As to quaternary structure, homotetramer.

It catalyses the reaction alpha-D-glucose 1-phosphate + ATP + H(+) = ADP-alpha-D-glucose + diphosphate. It participates in glycan biosynthesis; glycogen biosynthesis. Its function is as follows. Involved in the biosynthesis of ADP-glucose, a building block required for the elongation reactions to produce glycogen. Catalyzes the reaction between ATP and alpha-D-glucose 1-phosphate (G1P) to produce pyrophosphate and ADP-Glc. This is Glucose-1-phosphate adenylyltransferase from Arthrobacter sp. (strain FB24).